The sequence spans 202 residues: 3-isopropylmalate dehydratase small subunit 2 (202 aa).

It belongs to the LeuD family. LeuD type 1 subfamily. In terms of assembly, heterodimer of LeuC and LeuD.

The catalysed reaction is (2R,3S)-3-isopropylmalate = (2S)-2-isopropylmalate. It functions in the pathway amino-acid biosynthesis; L-leucine biosynthesis; L-leucine from 3-methyl-2-oxobutanoate: step 2/4. In terms of biological role, catalyzes the isomerization between 2-isopropylmalate and 3-isopropylmalate, via the formation of 2-isopropylmaleate. The polypeptide is 3-isopropylmalate dehydratase small subunit 2 (Bordetella parapertussis (strain 12822 / ATCC BAA-587 / NCTC 13253)).